We begin with the raw amino-acid sequence, 534 residues long: Dual specificity calcium/calmodulin-dependent 3',5'-cyclic nucleotide phosphodiesterase 1B (534 aa).

Residues 1–21 (MELSPRSPPEMLESDCPSPLE) form a disordered region. 2 positions are modified to phosphoserine: serine 7 and serine 14. Calmodulin-binding regions lie at residues 27–47 (SKKM…QLEN) and 116–139 (EKPK…MFRR). Positions 144–501 (VGPTYSTAVL…QKWKERAASG (358 aa)) constitute a PDEase domain. The Proton donor role is filled by histidine 221. Zn(2+) is bound by residues histidine 225, histidine 261, aspartate 262, and aspartate 368. Aspartate 262 provides a ligand contact to Mg(2+). Disordered regions lie at residues 442 to 473 (VQPT…GDPN) and 494 to 534 (WKER…GNLD). The segment covering 453–462 (KNQPSFQWRQ) has biased composition (polar residues). 2 positions are modified to phosphoserine: serine 464 and serine 512.

This sequence belongs to the cyclic nucleotide phosphodiesterase family. PDE1 subfamily. As to quaternary structure, homodimer. It depends on Zn(2+) as a cofactor. Requires Mg(2+) as cofactor. In terms of tissue distribution, expressed in central nervous system regions. Most abundant in basal ganglia. Also found in kidney papilla and adrenal medulla.

The protein resides in the cytoplasm. The protein localises to the cytosol. It carries out the reaction a nucleoside 3',5'-cyclic phosphate + H2O = a nucleoside 5'-phosphate + H(+). The catalysed reaction is 3',5'-cyclic GMP + H2O = GMP + H(+). The enzyme catalyses 3',5'-cyclic AMP + H2O = AMP + H(+). With respect to regulation, type I PDE are activated by the binding of calmodulin in the presence of Ca(2+). Cyclic nucleotide phosphodiesterase with a dual specificity for the second messengers cAMP and cGMP, which are key regulators of many important physiological processes. Has a preference for cGMP as a substrate. In Bos taurus (Bovine), this protein is Dual specificity calcium/calmodulin-dependent 3',5'-cyclic nucleotide phosphodiesterase 1B.